The chain runs to 152 residues: Sulfur-rich protein (152 aa).

The interval 1 to 20 (MSTVPVVQGAGSSNSAQDIS) is disordered. The next 2 helical transmembrane spans lie at 43 to 63 (VGLV…LVSA) and 69 to 89 (AIYL…VGIL).

It is found in the membrane. The polypeptide is Sulfur-rich protein (srp) (Chlamydia trachomatis serovar A (strain ATCC VR-571B / DSM 19440 / HAR-13)).